The primary structure comprises 1090 residues: Neurofilament heavy polypeptide (1090 aa).

Residues 2-98 are head; the sequence is MSFGSADALL…AVAARSEKEQ (97 aa). Residues serine 74 and serine 122 each carry the phosphoserine modification. An IF rod domain is found at 95-411; it reads EKEQLQALND…KLLEGEECRI (317 aa). The interval 99-130 is coil 1A; the sequence is LQALNDRFAGYIDKVRQLEAHNRSLEGEAAAL. The linker 1 stretch occupies residues 131 to 143; sequence RQQQAGRAAMGEL. Residues 144–242 are coil 1B; the sequence is YEREVREMRG…QEEVGELLGQ (99 aa). Residues 243–264 form a linker 12 region; the sequence is IQGCGAAQAQAQAEARDALKCD. Residues 265–286 form a coil 2A region; that stretch reads VTSALREIRAQLEGHAVQSTLQ. The interval 287 to 290 is linker 2; the sequence is SEEW. The tract at residues 291 to 411 is coil 2B; it reads FRVRLDRLSE…KLLEGEECRI (121 aa). 3 positions are modified to phosphoserine: serine 345, serine 416, and serine 419. The interval 412–1090 is tail; the sequence is GFGPSPFSLT…TEDKATKGEK (679 aa). The tract at residues 456–1090 is disordered; that stretch reads EGQTEEIRVT…TEDKATKGEK (635 aa). Acidic residues predominate over residues 468-495; it reads VTEEEDKEAQGQEGEEAEEGEEKEEEEG. Positions 496 to 506 are enriched in low complexity; sequence AAATSPPAEEA. A phosphoserine mark is found at serine 508, serine 523, serine 529, serine 535, serine 541, serine 547, serine 553, serine 559, serine 565, serine 571, serine 577, serine 583, serine 589, serine 595, serine 601, serine 607, serine 613, serine 619, serine 625, serine 631, serine 637, serine 643, serine 649, serine 655, serine 661, serine 667, serine 673, serine 679, serine 685, serine 691, serine 697, serine 703, serine 709, serine 715, serine 721, serine 727, serine 733, serine 739, serine 745, serine 751, serine 757, serine 763, and serine 769. The segment covering 508-579 has biased composition (basic and acidic residues); sequence SPEKETKSRV…KSPAEAKSPA (72 aa). 42 tandem repeats follow at residues 522–527, 528–533, 534–539, 540–545, 546–551, 552–557, 558–563, 564–569, 570–575, 576–581, 582–587, 588–593, 594–599, 600–605, 606–611, 612–617, 618–623, 624–629, 630–635, 636–641, 642–647, 648–653, 654–659, 660–665, 666–671, 672–677, 678–683, 684–689, 690–695, 696–701, 702–707, 708–713, 714–719, 720–725, 726–731, 732–737, 738–743, 744–749, 750–755, 756–761, 762–767, and 768–773. The 52 X 6 AA approximate tandem repeats of K-S-P-[AGISV]-[EATK]-[APVQ] stretch occupies residues 522–892; that stretch reads KSPGEAKSPG…KEEVKSPVKE (371 aa). The span at 595 to 633 shows a compositional bias: basic and acidic residues; the sequence is SPSEAKSPAEAKSPAEAKSPAEAKSPAEAKSPAEAKSPA. Residues 649–717 are compositionally biased toward basic and acidic residues; that stretch reads SPSEAKSPAE…KSPAEVKSPG (69 aa). Residues 745–781 are compositionally biased toward basic and acidic residues; it reads SPGEAKSPAEAKSPAEAKSPIEVKSPEKAKTPVKEGA. A 43; approximate repeat occupies 774–779; that stretch reads KTPVKE. Tandem repeats lie at residues 782-787, 788-793, 794-799, 808-813, 814-819, and 833-838. A phosphoserine mark is found at serine 783, serine 789, serine 795, serine 809, serine 815, and serine 834. Positions 788-834 are enriched in basic and acidic residues; sequence KSPEKAKSPVKEDIKPPAEAKSPEKAKSPVKEGAKPPEKAKPLDVKS. Threonine 839 is subject to Phosphothreonine. Basic and acidic residues-rich tracts occupy residues 843 to 964 and 974 to 1090; these read EEAK…KAVA and GVKE…KGEK. 3 tandem repeats follow at residues 858–863, 866–871, and 887–892. Phosphoserine is present on residues serine 859, serine 867, serine 888, and serine 947.

It belongs to the intermediate filament family. Forms heterodimers with NEFL; which can further hetero-oligomerize (in vitro). Forms heterodimers with INA (in vitro). There are a number of repeats of the tripeptide K-S-P, NFH is phosphorylated on a number of the serines in this motif. It is thought that phosphorylation of NFH results in the formation of interfilament cross bridges that are important in the maintenance of axonal caliber. In terms of processing, phosphorylation seems to play a major role in the functioning of the larger neurofilament polypeptides (NF-M and NF-H), the levels of phosphorylation being altered developmentally and coincidentally with a change in the neurofilament function. Post-translationally, phosphorylated in the head and rod regions by the PKC kinase PKN1, leading to the inhibition of polymerization. In terms of tissue distribution, expressed in the sciatic nerve (at protein level).

Its subcellular location is the cytoplasm. It is found in the cytoskeleton. It localises to the cell projection. The protein localises to the axon. Neurofilaments usually contain three intermediate filament proteins: NEFL, NEFM, and NEFH which are involved in the maintenance of neuronal caliber. NEFH has an important function in mature axons that is not subserved by the two smaller NF proteins. May additionally cooperate with the neuronal intermediate filament proteins PRPH and INA to form neuronal filamentous networks. The protein is Neurofilament heavy polypeptide (Nefh) of Mus musculus (Mouse).